Consider the following 230-residue polypeptide: Orotidine 5'-phosphate decarboxylase (230 aa).

Substrate is bound by residues D10, K31, 58–67 (DLKLHDIPNT), T117, R179, Q188, G208, and R209. The active-site Proton donor is the K60.

The protein belongs to the OMP decarboxylase family. Type 1 subfamily. As to quaternary structure, homodimer.

The catalysed reaction is orotidine 5'-phosphate + H(+) = UMP + CO2. It participates in pyrimidine metabolism; UMP biosynthesis via de novo pathway; UMP from orotate: step 2/2. In terms of biological role, catalyzes the decarboxylation of orotidine 5'-monophosphate (OMP) to uridine 5'-monophosphate (UMP). The protein is Orotidine 5'-phosphate decarboxylase of Staphylococcus aureus (strain bovine RF122 / ET3-1).